The primary structure comprises 309 residues: MPRHCSAAGCCTRDTRETRNRGISFHRLPKKDNPRRGLWLANCQRLDPSGQGLWDPTSEYIYFCSKHFEENCFELVGISGYHRLKEGAVPTIFESFSKLRRTAKTKGHGYPPGLPDVSRLRRCRKRCSERQGPTTPFSPPPRADIICFPVEEASAPATLPASPAVRLDPGLNSPFSDLLGPLGAQADEAGCSTQPSPEQHPSPLEPQPASPSAYMLRLPPPAGAYIQNEHSYQVGSALLWKRRAEAALDALDKTQRQLQACKRREQRLRLRLTKLQQERAREKRAQADARQTLKDHVQDFAMQLSSSMA.

The THAP-type zinc finger occupies 1 to 93 (MPRHCSAAGC…LKEGAVPTIF (93 aa)). A Phosphoserine modification is found at serine 162. The segment at 176–210 (SDLLGPLGAQADEAGCSTQPSPEQHPSPLEPQPAS) is disordered. Pro residues predominate over residues 198 to 209 (EQHPSPLEPQPA). Serine 210 is modified (phosphoserine). An HCFC1-binding motif (HBM) motif is present at residues 229 to 232 (EHSY).

Forms homodimers. Interacts with HDAC3 and nuclear hormone receptor corepressors. Interacts via HBM with HCFC1.

Its subcellular location is the nucleus. The protein localises to the chromosome. Its function is as follows. Chromatin-associated, histone tail-binding protein that represses transcription via recruitment of HDAC3 and nuclear hormone receptor corepressors. The polypeptide is THAP domain-containing protein 7 (Thap7) (Mus musculus (Mouse)).